A 500-amino-acid polypeptide reads, in one-letter code: MEAPTLSQLEGLRYSELQKLAKTAGLKANLKADKLLKVLKAHFYPESKNETLDSDGSSSLTDTDELNSSQEKEEPVSVSFVTHRRGRGRKPIRNQDTPKDEFLTVSAGVGTENMASSIDRTQQQNCTESKKEETTSPIIDNKHRKRSRSEDTSKQNNLESTGKTEKRQKKASNVTSVASTGKIPRLAGRLSKPGSKPSTPNFKKLHEAHFKKMESIDKYMERKQKRLDAVSSSIQEVKMLTKKSNLLKSVEKTPVSDIKKPVKSRLSLLSPLPRTTGASPSRTPMSQRRSCRSSTASKSILVDRSGFKPSVFSSSKMNVRFSEATKDNEHKRSLIKTPARKSSSFLAVTPESEPRRILPSVRKTELLPAPEKADKPDVNITLNTTTQPSPATGMSACKAITPFKFTAQNTETPNTKKKGKFDLQASLSRQLGYQPHKGKLKPWGESKENKPDPNSNVSVLKNNYKQPHLQTREDRRNQHVQNRKNKRDQALGTRRGVPVK.

Disordered regions lie at residues 48–204 (KNET…NFKK), 241–299 (TKKS…ASKS), 319–353 (VRFSEATKDNEHKRSLIKTPARKSSSFLAVTPESE), and 365–500 (ELLP…VPVK). Positions 82–92 (THRRGRGRKPI) are enriched in basic residues. Residues 113–127 (NMASSIDRTQQQNCT) show a composition bias toward polar residues. Over residues 264–274 (SRLSLLSPLPR) the composition is skewed to low complexity. Residues 276 to 298 (TGASPSRTPMSQRRSCRSSTASK) are compositionally biased toward polar residues. Basic and acidic residues predominate over residues 323 to 332 (EATKDNEHKR). A compositionally biased stretch (polar residues) spans 380 to 392 (ITLNTTTQPSPAT). Basic and acidic residues predominate over residues 442 to 451 (PWGESKENKP). The segment covering 452-469 (DPNSNVSVLKNNYKQPHL) has biased composition (polar residues).

It belongs to the NUSAP family. As to quaternary structure, interacts with DNA, microtubules, ipo7, kpna2 and kpnb1. Microtubule stabilization is inhibited by ipo7 and kpna2, while microtubule bundling is inhibited by kpnb1. Active GTP-bound ran causes dissociation of ipo7 and kpnb1.

The protein resides in the cytoplasm. Its subcellular location is the nucleus. It is found in the cytoskeleton. The protein localises to the spindle. Functionally, microtubule-associated protein with the capacity to bundle and stabilize microtubules. May associate with chromosomes and promote the organization of meiotic or mitotic spindle microtubules around them. In Xenopus tropicalis (Western clawed frog), this protein is Nucleolar and spindle-associated protein 1 (nusap1).